The sequence spans 405 residues: Tryptophan synthase beta chain (405 aa).

K98 carries the N6-(pyridoxal phosphate)lysine modification.

The protein belongs to the TrpB family. Tetramer of two alpha and two beta chains. It depends on pyridoxal 5'-phosphate as a cofactor.

It carries out the reaction (1S,2R)-1-C-(indol-3-yl)glycerol 3-phosphate + L-serine = D-glyceraldehyde 3-phosphate + L-tryptophan + H2O. It functions in the pathway amino-acid biosynthesis; L-tryptophan biosynthesis; L-tryptophan from chorismate: step 5/5. Its function is as follows. The beta subunit is responsible for the synthesis of L-tryptophan from indole and L-serine. This Stenotrophomonas maltophilia (strain K279a) protein is Tryptophan synthase beta chain.